The chain runs to 127 residues: Fluoride-specific ion channel FluC (127 aa).

A run of 4 helical transmembrane segments spans residues L4–G24, G36–A56, V72–I92, and F101–V121. Residues G76 and T79 each coordinate Na(+).

The protein belongs to the fluoride channel Fluc/FEX (TC 1.A.43) family.

The protein localises to the cell inner membrane. It catalyses the reaction fluoride(in) = fluoride(out). Na(+) is not transported, but it plays an essential structural role and its presence is essential for fluoride channel function. Fluoride-specific ion channel. Important for reducing fluoride concentration in the cell, thus reducing its toxicity. The sequence is that of Fluoride-specific ion channel FluC from Caulobacter vibrioides (strain ATCC 19089 / CIP 103742 / CB 15) (Caulobacter crescentus).